Reading from the N-terminus, the 1338-residue chain is Thioester-containing protein 1 allele S3 (1338 aa).

The first 21 residues, 1–21 (MWQFIRSRILTVIIFIGAAHG), serve as a signal peptide directing secretion. Asparagine 68, asparagine 199, asparagine 242, asparagine 312, and asparagine 481 each carry an N-linked (GlcNAc...) asparagine glycan. Residues 580-609 (ENEFDIFHSLGLFARTLDDILFDSANEKTG) are may contain the cleavage site. Residues asparagine 637, asparagine 728, asparagine 813, and asparagine 828 are each glycosylated (N-linked (GlcNAc...) asparagine). Residues 859–862 (CGEQ) constitute a cross-link (isoglutamyl cysteine thioester (Cys-Gln)). 3 disulfide bridges follow: cysteine 1217-cysteine 1283, cysteine 1326-cysteine 1338, and cysteine 1329-cysteine 1334.

As to quaternary structure, heterodimer of a TEP1-N chain and an TEP1-C chain non-covalently linked. Forms a complex composed of TEP1-N and TEP1-C heterodimer, LRIM1 and APL1C; the interaction stabilizes TEP1-N and TEP1-C heterodimer, prevents its binding to tissues while circulating in the hemolymph and protects the thioester bond from hydrolysis. Mature TEP1 and to a lesser extent full-length TEP1 interact with SPCLIP1; the interaction is induced by microbial infection. Post-translationally, in the hemolymph, the full-length protein is cleaved by an unknow protease into a 75kDa N-terminal (TEP1-N) chain and an 80kDa C-terminal (TEP1-C) chain which remain non-covalently linked. The TEP1-C chain contains the thioester bond which covalently binds to the pathogen surface. Cleavage is induced by bacterial infection or aseptic wound injury. During embryonic and pupal development, the cleaved form is the predominant form. In terms of processing, N-glycosylated.

It localises to the secreted. Its function is as follows. Plays an essential role in the innate immune response against bacteria, fungi and protozoa infection. After proteolytic cleavage, the protein C-terminus binds covalently through a thioester bond to the pathogen surface resulting in pathogen clearance either by melanization or lysis. Initiate the recruitment and activation of a cascade of proteases, mostly of CLIP-domain serine proteases, which leads to the proteolytic cleavage of the prophenoloxidase (PPO) into active phenoloxidase (PO), the rate-limiting enzyme in melanin biosynthesis. In response to parasite P.berghei-mediated infection, binds to and mediates killing of ookinetes, as they egress from midgut epithelial cells into the basal labyrinth, by both lysis and melanization. During bacterial infection, binds to both Gram-positive and Gram-negative bacteria but only promotes phagocytosis of Gram-negative bacteria. Promotes the accumulation of SPCLIP1 onto the surface of P.berghei ookinetes and bacterium E.coli which leads to the melanization of the pathogen. Recruits CLIPA2 to bacteria surface. In response to bacterial infection, required for periostial hemocyte aggregation, but not for the aggregation of sessile hemocytes in non-periostial regions. During the late stage of fungus B.bassiana-mediated infection, required for the initiation of hyphae melanization by binding to the surface of hyphae and recruiting prophenoloxidase PPO to them. Plays a role in male fertility by binding to defective sperm cells and promoting their removal during spermatogenesis. In terms of biological role, binds to and mediates killing of parasite P.bergei ookinetes by lysis. Binds covalently through a thioester bond to the pathogen surface resulting in pathogen clearance. The polypeptide is Thioester-containing protein 1 allele S3 (Anopheles gambiae (African malaria mosquito)).